The chain runs to 365 residues: P2Y purinoceptor 4 (365 aa).

The Extracellular segment spans residues 1-34; the sequence is MASTESSLLRSLGLSPGPGSSEVELDCWFDEDFK. Residues 35-61 traverse the membrane as a helical segment; it reads FILLPVSYAVVFVLGLGLNAPTLWLFI. The Cytoplasmic portion of the chain corresponds to 62 to 72; that stretch reads FRLRPWDATAT. Residues 73–95 form a helical membrane-spanning segment; it reads YMFHLALSDTLYVLSLPTLIYYY. Residues 96-112 lie on the Extracellular side of the membrane; that stretch reads AAHNHWPFGTEICKFVR. Cysteine 108 and cysteine 185 are disulfide-bonded. A helical transmembrane segment spans residues 113-131; sequence FLFYWNLYCSVLFLTCISV. Topologically, residues 132-154 are cytoplasmic; sequence HRYLGICHPLRALRWGRPRLAGL. A helical transmembrane segment spans residues 155 to 174; that stretch reads LCLAVWLVVAGCLVPNLFFV. At 175–196 the chain is on the extracellular side; sequence TTSNKGTTVLCHDTTRPEEFDH. A helical transmembrane segment spans residues 197-222; it reads YVHFSSAVMGLLFGVPCLVTLVCYGL. Residues 223–246 lie on the Cytoplasmic side of the membrane; that stretch reads MARRLYQPLPGSAQSSSRLRSLRT. A helical transmembrane segment spans residues 247-269; sequence IAVVLTVFAVCFVPFHITRTIYY. The Extracellular portion of the chain corresponds to 270-287; the sequence is LARLLEADCRVLNIVNVV. Residues 288–309 traverse the membrane as a helical segment; sequence YKVTRPLASANSCLDPVLYLLT. The Cytoplasmic portion of the chain corresponds to 310 to 365; that stretch reads GDKYRRQLRQLCGGGKPQPRTAASSLALVSLPEDSSCRWAATPQDSSCSTPRADRL. Serine 333 and serine 334 each carry phosphoserine.

Belongs to the G-protein coupled receptor 1 family. Post-translationally, phosphorylation of Ser-333 and Ser-334 is a key step in agonist-dependent desensitization and loss of surface P2RY4. This phosphorylation does not involve PKC, nor other calcium activated kinases. Pancreas.

The protein resides in the cell membrane. Its function is as follows. Receptor for UTP and UDP coupled to G-proteins that activate a phosphatidylinositol-calcium second messenger system. Not activated by ATP or ADP. This Homo sapiens (Human) protein is P2Y purinoceptor 4 (P2RY4).